The sequence spans 257 residues: uncharacterized protein (257 aa).

Basic and acidic residues predominate over residues 74-83 (LKDDLTRDNS). 2 disordered regions span residues 74–115 (LKDD…TQKR) and 209–257 (PYLN…YDSF). The span at 100–113 (SFQNMNSSMPSSTQ) shows a compositional bias: polar residues. Positions 216–236 (SEDDTDSSIVEVETDYSEEEK) are enriched in acidic residues.

This sequence belongs to the asfivirus DP238L family.

This is an uncharacterized protein from Ornithodoros (relapsing fever ticks).